We begin with the raw amino-acid sequence, 777 residues long: DISP complex protein LRCH3 (777 aa).

LRR repeat units follow at residues 56–79 (AAVT…AANH), 81–104 (LTDT…ACHF), 105–127 (VSLE…ILNL), 128–150 (QALT…LCNL), 152–172 (LKVL…IGHL), 173–195 (RHLM…IGNL), 196–218 (EALR…LAEL), 220–239 (LIRL…CYRN), 240–264 (LRHL…CIKG), and 266–290 (VHIF…DRRP). The tract at residues 56–290 (AAVTGVLSLS…PDLPDYDRRP (235 aa)) is mediates interaction with DOCK7. Residues serine 324, serine 415, and serine 419 each carry the phosphoserine modification. The interval 382–648 (TAEEEEAEVR…DSTDSITGQN (267 aa)) is mediates direct interaction with MYO6. The tract at residues 568–590 (FTPLKSDDRPNALLSSPATETVH) is disordered. Residues serine 611 and serine 628 each carry the phosphoserine modification. The segment at 621–653 (ETNKGHASPLPPSAAPTTDSTDSITGQNSRQRE) is disordered. Over residues 635–645 (APTTDSTDSIT) the composition is skewed to low complexity. The 114-residue stretch at 652–765 (REEELELIDQ…VTVQALLELA (114 aa)) folds into the Calponin-homology (CH) domain.

As to quaternary structure, component of the DOCK7-induced septin displacement/DISP complex, at least composed of DOCK7, LRCH3 and MYO6.

The protein resides in the cytoplasm. As part of the DISP complex, may regulate the association of septins with actin and thereby regulate the actin cytoskeleton. This is DISP complex protein LRCH3 from Homo sapiens (Human).